The chain runs to 745 residues: Mitogen-activated protein kinase kinase kinase zak-1 (745 aa).

A Protein kinase domain is found at 31-305; it reads IQVGDHIGVG…KVMDECEKFM (275 aa). Residues 37–45 and Lys-63 each bind ATP; that span reads IGVGTFGAV. Asp-159 functions as the Proton acceptor in the catalytic mechanism. Residues 307-352 adopt a coiled-coil conformation; sequence LEDWKTEIEKQEKNVEKMRKDLEKRREQLEIREKALKQRMKVEQAV. The SAM domain occupies 366 to 438; that stretch reads WSEHHTSHWV…MKMIRKLADT (73 aa). Residues 693 to 745 are disordered; the sequence is LTRRRRTTTTNSEDTEKSDTNNKTPESQARRVHVHGGKDKWNWKKGKSRPKFT. Positions 735–745 are enriched in basic residues; the sequence is WKKGKSRPKFT.

Belongs to the protein kinase superfamily. STE Ser/Thr protein kinase family. MAP kinase kinase kinase subfamily. Requires Mg(2+) as cofactor. Widely expressed; expressed in most tissues, including intestines, muscle and the nervous system.

It is found in the cytoplasm. The protein resides in the nucleus. It catalyses the reaction L-seryl-[protein] + ATP = O-phospho-L-seryl-[protein] + ADP + H(+). The catalysed reaction is L-threonyl-[protein] + ATP = O-phospho-L-threonyl-[protein] + ADP + H(+). Functionally, stress-activated component of a protein kinase signal transduction cascade that promotes programmed cell death in response to ribotoxic stress. Acts as the proximal sensor of ribotoxic stress: directly binds to the ribosome, thereby acting as a sentinel for colliding ribosomes. Upon ribosome collisions, activates the stress-activated protein kinase signal transduction cascade, leading to programmed cell death. Acts by catalyzing phosphorylation of MAP kinase kinases, leading to activation of the JNK and MAP kinase p38 pathways. The protein is Mitogen-activated protein kinase kinase kinase zak-1 of Caenorhabditis elegans.